Consider the following 311-residue polypeptide: MQEIQKNTKKEQYNLNKLQKRLRRNVGEAIADFNMIEEGDRIMVCLSGGKDSYTMLEILRNLQQSAPINFSLVAVNLDQKQPGFPEHILPAYLEQLGVEYKIVEENTYGIVKEKIPEGKTTCSLCSRLRRGILYRTATELGATKIALGHHRDDILQTLFLNMFYGGKMKGMPPKLMSDDGKHIVIRPLAYCREKDIIRFAEAKAFPIIPCNLCGSQPNLQRQVIADMLRDWDKRYPGRIETMFSAMQNVVPSHLCDTNLFDFKGITHGSEVVDGGDLAFDREEIPLQPAGWQPEEDDTALEALRLDVIEVK.

The PP-loop motif signature appears at 47–52 (SGGKDS). Residues Cys-122, Cys-125, and Cys-213 each contribute to the [4Fe-4S] cluster site.

It belongs to the TtcA family. Homodimer. The cofactor is Mg(2+). It depends on [4Fe-4S] cluster as a cofactor.

Its subcellular location is the cytoplasm. It catalyses the reaction cytidine(32) in tRNA + S-sulfanyl-L-cysteinyl-[cysteine desulfurase] + AH2 + ATP = 2-thiocytidine(32) in tRNA + L-cysteinyl-[cysteine desulfurase] + A + AMP + diphosphate + H(+). The protein operates within tRNA modification. Functionally, catalyzes the ATP-dependent 2-thiolation of cytidine in position 32 of tRNA, to form 2-thiocytidine (s(2)C32). The sulfur atoms are provided by the cysteine/cysteine desulfurase (IscS) system. In Salmonella typhimurium (strain LT2 / SGSC1412 / ATCC 700720), this protein is tRNA-cytidine(32) 2-sulfurtransferase.